The sequence spans 525 residues: GMP synthase [glutamine-hydrolyzing] (525 aa).

The region spanning 9–207 is the Glutamine amidotransferase type-1 domain; that stretch reads RILILDFGSQ…VKEICHCEAL (199 aa). The active-site Nucleophile is Cys86. Residues His181 and Glu183 contribute to the active site. The GMPS ATP-PPase domain occupies 208–400; that stretch reads WTPATIIEDA…LGLPYNMLYR (193 aa). 235-241 serves as a coordination point for ATP; sequence SGGVDSS.

As to quaternary structure, homodimer.

The catalysed reaction is XMP + L-glutamine + ATP + H2O = GMP + L-glutamate + AMP + diphosphate + 2 H(+). It functions in the pathway purine metabolism; GMP biosynthesis; GMP from XMP (L-Gln route): step 1/1. Catalyzes the synthesis of GMP from XMP. In Tolumonas auensis (strain DSM 9187 / NBRC 110442 / TA 4), this protein is GMP synthase [glutamine-hydrolyzing].